Here is a 106-residue protein sequence, read N- to C-terminus: Small ribosomal subunit protein uS10 (106 aa).

This sequence belongs to the universal ribosomal protein uS10 family. In terms of assembly, part of the 30S ribosomal subunit.

Functionally, involved in the binding of tRNA to the ribosomes. This chain is Small ribosomal subunit protein uS10, found in Synechococcus sp. (strain CC9311).